We begin with the raw amino-acid sequence, 304 residues long: tRNA-uridine aminocarboxypropyltransferase 1 (304 aa).

Positions 1-30 (MALSPSVVPQESEENNANCVETKQSQTAST) are disordered. Positions 15 to 30 (NNANCVETKQSQTAST) are enriched in polar residues. The DXTW motif lies at 206–209 (DSTW).

It belongs to the TDD superfamily. DTWD1 family.

Its subcellular location is the nucleus. It catalyses the reaction a uridine in tRNA + S-adenosyl-L-methionine = a 3-[(3S)-3-amino-3-carboxypropyl]uridine in tRNA + S-methyl-5'-thioadenosine + H(+). Functionally, catalyzes the formation of 3-(3-amino-3-carboxypropyl)uridine (acp3U) at position 20 in the D-loop of several cytoplasmic tRNAs (acp3U(20)). The protein is tRNA-uridine aminocarboxypropyltransferase 1 of Rattus norvegicus (Rat).